The sequence spans 1336 residues: Cytokinesis protein sepH (1336 aa).

The span at 1–10 (MVSRSSETSE) shows a compositional bias: low complexity. Residues 1-46 (MVSRSSETSEGPPPPSKIPGTPAKTRLSRLNSSPAKQDKPKDDRVV) form a disordered region. Basic and acidic residues predominate over residues 36–46 (KQDKPKDDRVV). Positions 59–309 (YQLGDCLGKG…ARKLLKHPWI (251 aa)) constitute a Protein kinase domain. ATP-binding positions include 65–73 (LGKGAFGSV) and Lys88. Asp181 functions as the Proton acceptor in the catalytic mechanism. The disordered stretch occupies residues 368–402 (SRYTPTKDILPSPVSKHVTDRFRSPDSTEEDNWDD). Basic and acidic residues predominate over residues 384–393 (HVTDRFRSPD). A coiled-coil region spans residues 654–682 (AQLEEGLDEVDLEANIARDKYARLRGQVE). The span at 1194–1205 (ERSESFSLEKRK) shows a compositional bias: basic and acidic residues. Residues 1194–1336 (ERSESFSLEK…PTHADSDWAS (143 aa)) are disordered. The segment covering 1213–1236 (TSTTPPGYLANQSAPATPQINRFN) has biased composition (polar residues). 2 stretches are compositionally biased toward low complexity: residues 1253-1264 (PSLSSSALALRP) and 1272-1285 (PSLSAGLSSSAGPS). Over residues 1315 to 1327 (SRRRSILPQRRRP) the composition is skewed to basic residues.

The protein belongs to the protein kinase superfamily. Ser/Thr protein kinase family. CDC7 subfamily. The cofactor is Mg(2+).

The catalysed reaction is L-seryl-[protein] + ATP = O-phospho-L-seryl-[protein] + ADP + H(+). It catalyses the reaction L-threonyl-[protein] + ATP = O-phospho-L-threonyl-[protein] + ADP + H(+). Its function is as follows. Required for early events during cytokinesis including localization of cytoskeletal components to the cytokinetic ring. This is Cytokinesis protein sepH from Aspergillus niger (strain ATCC MYA-4892 / CBS 513.88 / FGSC A1513).